The chain runs to 122 residues: Large ribosomal subunit protein uL14c (122 aa).

The protein belongs to the universal ribosomal protein uL14 family. Part of the 50S ribosomal subunit.

Its subcellular location is the plastid. The protein resides in the chloroplast. In terms of biological role, binds to 23S rRNA. This is Large ribosomal subunit protein uL14c from Gossypium barbadense (Sea Island cotton).